Reading from the N-terminus, the 159-residue chain is Nanos homolog 3 (159 aa).

Residues 42-87 (QEMQSDADSDEQAAALLESPSGPIRSRDSPEQNTSPGGGKPKSSPA) are disordered. The segment at 91–145 (FCSFCKHNGETEAVYTSHYLKNRDGDVMCPYLRQYKCPLCGATGAKAHTKRFCPM) adopts a Nanos-type zinc-finger fold. Zn(2+) is bound by residues Cys92, Cys95, His108, Cys119, Cys127, Cys130, His138, and Cys143. 2 short sequence motifs (C2HC) span residues 92–119 (CSFC…DVMC) and 127–143 (CPLC…KRFC). The interaction with mylpfa stretch occupies residues 92 to 159 (CSFCKHNGET…YCSVYAKSTW (68 aa)).

The protein belongs to the nanos family. As to quaternary structure, interacts (via C-terminus) with myosin mylpfa/mylz2; the interaction negatively regulates mylpfa phosphorylation. In terms of tissue distribution, in the embryo, displays early ubiquitous expression before being restricted to primordial germ cells in a 3'-UTR-dependent manner. Expressed in early stage germ cells in larval and adult ovaries.

Its subcellular location is the cytoplasm. The protein resides in the perinuclear region. Its function is as follows. RNA-binding protein which binds to RNA with no sequence specificity. Probably represses translation of specific mRNAs. Essential for the development of primordial germ cells (PGCs) by ensuring their proper migration and survival but is not required for PGC specification. Also required to maintain oocyte production in the adult ovary. Negatively regulates phosphorylation of myosin mylpfa/mylz2. The chain is Nanos homolog 3 from Danio rerio (Zebrafish).